Consider the following 317-residue polypeptide: U5 small nuclear ribonucleoprotein TSSC4 (317 aa).

The span at 1–19 (MAETEAGLEADEPTEDDTL) shows a compositional bias: acidic residues. The interval 1-74 (MAETEAGLEA…PPTGTLTTAV (74 aa)) is disordered. A compositionally biased stretch (low complexity) spans 20–37 (PSDTVSLSDSDSDLSLPS). A phosphoserine mark is found at S57, S64, S83, and S92. The interval 74–101 (VQPFHLRGMSSTFSQRSHSIFDCLESAA) is hom2; mediates interaction with the U5 snRNP complexes and required for spliceosomal tri-snRNP complex assembly. The segment at 101-152 (ARQAPCSAPQTSVSDNGSFRRPVTPPSQTPARGLSRVHGNTGPTRVLPVPDY) is disordered. The span at 108–117 (APQTSVSDNG) shows a compositional bias: polar residues. Residue T124 is modified to Phosphothreonine. The tract at residues 146 to 300 (VLPVPDYVSH…SKKRSRDHFR (155 aa)) is interaction with SNRNP200. Positions 147-183 (LPVPDYVSHPERWTKYSLEDVSEASEQSNRDAALAFL) are hom3; mediates interaction with the U5 snRNP complexes. A hom4; necessary for interaction with the PRPF19 complex and required for spliceosomal tri-snRNP complex assembly region spans residues 198-238 (FNQDPSSCGEGRVVFTKPVRDSEARAERKRVLKKGVGSGAG). An N6-acetyllysine modification is found at K214. The segment at 216–317 (VRDSEARAER…GPGSERGPSV (102 aa)) is disordered. The span at 240-250 (EAAVELAHLAG) shows a compositional bias: low complexity.

This sequence belongs to the TSSC4 family. In terms of assembly, interacts in a RNA-independent manner with distinct U5 snRNP-containing complexes, the mono-U5 snRNP and the post-splicing U5 snRNP-PRPF19 complex. Interacts with SNRNP200; the interaction is direct, excludes recruitment of C9ORF78 and WBP4 to SNRNP200 and negatively regulates its RNA helicase activity. Interacts with PRPF8; the interaction is direct. As to expression, expressed in placenta. Widely expressed in embryo and newborn.

The protein resides in the nucleus. Its subcellular location is the cytoplasm. Functionally, protein associated with the U5 snRNP, during its maturation and its post-splicing recycling and which is required for spliceosomal tri-snRNP complex assembly in the nucleus. Has a molecular sequestering activity and transiently hinders SNRNP200 binding sites for constitutive splicing factors that intervene later during the assembly of the spliceosome and splicing. Together with its molecular sequestering activity, may also function as a molecular adapter and placeholder, coordinating the assembly of the U5 snRNP and its association with the U4/U6 di-snRNP. The protein is U5 small nuclear ribonucleoprotein TSSC4 of Mus musculus (Mouse).